Reading from the N-terminus, the 784-residue chain is Cas scaffolding protein family member 4 (784 aa).

An SH3 domain is found at 11-73 (PKALLARALY…PANRLQILEE (63 aa)). 5 positions are modified to phosphoserine: Ser197, Ser246, Ser302, Ser373, and Ser387. Positions 343–376 (TPNIYDVPRAMPDVPQAGKELGKAGGPSENSVDH) are disordered. Positions 466-536 (RDSLEANIDA…LLETKERLES (71 aa)) form a coiled coil. Positions 614–635 (KEGESYQRKAPFQKQRASEQPP) are disordered.

It belongs to the CAS family. Interacts (via SH3 domain) with PTK2/FAK1 (via C-terminus). In terms of processing, phosphorylated on tyrosines by SRC.

The protein resides in the cytoplasm. Its subcellular location is the cytoskeleton. It is found in the cell junction. The protein localises to the focal adhesion. Its function is as follows. Docking protein that plays a role in tyrosine kinase-based signaling related to cell adhesion and cell spreading. Regulates PTK2/FAK1 activity, focal adhesion integrity, and cell spreading. In Sus scrofa (Pig), this protein is Cas scaffolding protein family member 4.